Consider the following 354-residue polypeptide: MTSLKNDVFLRALQRQRTPYTPVWMMRQAGRYLPEYRETRKKAGSFMDLCKNTDLATEVTLQPLDRFPLDAAILFSDILTIPDAMGLGLYFEEGEGPKFERTLREESDIRKLAVPDIGSELRYVTDAVSQIRRALDGRVPLIGFSGSPWTLATYMVEGRGGTDFLTIKQMAYARPDLLHHILSVTAQAVTAYLNAQIAAGAQAVMIFDSWGGALSHYAYQEFSLQYMQQIVSGLTKESEGRVVPSIVFTKGGGLWLESQAETGADALGLDWTISLGEARKRVGSKVALQGNMDPAILLSTPEAVEKEVARILADYGIGNGHVFNLGHGITQFTPHENAEAMIKAVHAISSKYHL.

Substrate contacts are provided by residues 27–31, aspartate 77, tyrosine 154, serine 209, and histidine 327; that span reads RQAGR.

This sequence belongs to the uroporphyrinogen decarboxylase family. Homodimer.

The protein resides in the cytoplasm. It carries out the reaction uroporphyrinogen III + 4 H(+) = coproporphyrinogen III + 4 CO2. Its pathway is porphyrin-containing compound metabolism; protoporphyrin-IX biosynthesis; coproporphyrinogen-III from 5-aminolevulinate: step 4/4. Catalyzes the decarboxylation of four acetate groups of uroporphyrinogen-III to yield coproporphyrinogen-III. This is Uroporphyrinogen decarboxylase from Methylobacillus flagellatus (strain ATCC 51484 / DSM 6875 / VKM B-1610 / KT).